The primary structure comprises 39 residues: Photosystem II reaction center protein J (39 aa).

The helical transmembrane segment at 7 to 27 threads the bilayer; it reads IPLWIVATVAGTGVLVVVGLF.

It belongs to the PsbJ family. As to quaternary structure, PSII is composed of 1 copy each of membrane proteins PsbA, PsbB, PsbC, PsbD, PsbE, PsbF, PsbH, PsbI, PsbJ, PsbK, PsbL, PsbM, PsbT, PsbX, PsbY, PsbZ, Psb30/Ycf12, peripheral proteins PsbO, CyanoQ (PsbQ), PsbU, PsbV and a large number of cofactors. It forms dimeric complexes.

Its subcellular location is the cellular thylakoid membrane. Functionally, one of the components of the core complex of photosystem II (PSII). PSII is a light-driven water:plastoquinone oxidoreductase that uses light energy to abstract electrons from H(2)O, generating O(2) and a proton gradient subsequently used for ATP formation. It consists of a core antenna complex that captures photons, and an electron transfer chain that converts photonic excitation into a charge separation. This Synechococcus elongatus (strain ATCC 33912 / PCC 7942 / FACHB-805) (Anacystis nidulans R2) protein is Photosystem II reaction center protein J.